A 100-amino-acid chain; its full sequence is Small ribosomal subunit protein uS14c (100 aa).

This sequence belongs to the universal ribosomal protein uS14 family. Part of the 30S ribosomal subunit.

It is found in the plastid. The protein localises to the chloroplast. In terms of biological role, binds 16S rRNA, required for the assembly of 30S particles. The sequence is that of Small ribosomal subunit protein uS14c from Eucalyptus globulus subsp. globulus (Tasmanian blue gum).